The following is a 302-amino-acid chain: Acetaldehyde dehydrogenase (302 aa).

The active-site Acyl-thioester intermediate is the Cys-131. Residues 162–170 (SAGPGTRKN) and Asn-273 each bind NAD(+).

Belongs to the acetaldehyde dehydrogenase family.

The enzyme catalyses acetaldehyde + NAD(+) + CoA = acetyl-CoA + NADH + H(+). The sequence is that of Acetaldehyde dehydrogenase from Acidovorax sp. (strain JS42).